A 420-amino-acid chain; its full sequence is Putative competence-damage inducible protein (420 aa).

This sequence belongs to the CinA family.

This is Putative competence-damage inducible protein from Halalkalibacterium halodurans (strain ATCC BAA-125 / DSM 18197 / FERM 7344 / JCM 9153 / C-125) (Bacillus halodurans).